The sequence spans 269 residues: Tryptophan synthase alpha chain (269 aa).

Catalysis depends on proton acceptor residues Glu-49 and Asp-60.

This sequence belongs to the TrpA family. As to quaternary structure, tetramer of two alpha and two beta chains.

It catalyses the reaction (1S,2R)-1-C-(indol-3-yl)glycerol 3-phosphate + L-serine = D-glyceraldehyde 3-phosphate + L-tryptophan + H2O. It participates in amino-acid biosynthesis; L-tryptophan biosynthesis; L-tryptophan from chorismate: step 5/5. Functionally, the alpha subunit is responsible for the aldol cleavage of indoleglycerol phosphate to indole and glyceraldehyde 3-phosphate. This Acidovorax ebreus (strain TPSY) (Diaphorobacter sp. (strain TPSY)) protein is Tryptophan synthase alpha chain.